Here is a 340-residue protein sequence, read N- to C-terminus: Flap endonuclease 1 (340 aa).

The segment at 1–98 (MGLNLKDLVV…AEIERRKQIK (98 aa)) is N-domain. Mg(2+) is bound by residues aspartate 27, aspartate 80, glutamate 152, glutamate 154, aspartate 173, aspartate 175, and aspartate 236. Positions 116–258 (DARKYAQQTT…TALKMIKQHS (143 aa)) are I-domain.

This sequence belongs to the XPG/RAD2 endonuclease family. FEN1 subfamily. As to quaternary structure, interacts with PCNA. PCNA stimulates the nuclease activity without altering cleavage specificity. The cofactor is Mg(2+).

In terms of biological role, structure-specific nuclease with 5'-flap endonuclease and 5'-3' exonuclease activities involved in DNA replication and repair. During DNA replication, cleaves the 5'-overhanging flap structure that is generated by displacement synthesis when DNA polymerase encounters the 5'-end of a downstream Okazaki fragment. Binds the unpaired 3'-DNA end and kinks the DNA to facilitate 5' cleavage specificity. Cleaves one nucleotide into the double-stranded DNA from the junction in flap DNA, leaving a nick for ligation. Also involved in the base excision repair (BER) pathway. Acts as a genome stabilization factor that prevents flaps from equilibrating into structures that lead to duplications and deletions. Also possesses 5'-3' exonuclease activity on nicked or gapped double-stranded DNA. This chain is Flap endonuclease 1, found in Nitrosopumilus maritimus (strain SCM1).